The chain runs to 289 residues: Probable endonuclease 4 (289 aa).

Zn(2+) is bound by residues H75, H115, E153, D187, H190, H224, D237, H239, and E269.

It belongs to the AP endonuclease 2 family. The cofactor is Zn(2+).

It catalyses the reaction Endonucleolytic cleavage to 5'-phosphooligonucleotide end-products.. Endonuclease IV plays a role in DNA repair. It cleaves phosphodiester bonds at apurinic or apyrimidinic (AP) sites, generating a 3'-hydroxyl group and a 5'-terminal sugar phosphate. The sequence is that of Probable endonuclease 4 from Chlamydia abortus (strain DSM 27085 / S26/3) (Chlamydophila abortus).